The sequence spans 444 residues: NADH-ubiquinone oxidoreductase chain 4 (444 aa).

13 helical membrane passes run 4–24, 28–48, 53–73, 87–107, 109–129, 141–161, 173–193, 212–232, 245–265, 272–294, 306–326, 330–350, and 373–393; these read YLFM…WWLV, IFLL…LSMI, GVDF…CLMI, NFFV…FSSL, LFSF…LILG, VYLM…LFSI, LIDF…AFLV, PISG…YGIF, FNYF…FVCF, SLIA…TMNW, GHGI…ELLG, LLIN…WFLL, and IISW…FSAV.

It belongs to the complex I subunit 4 family.

It localises to the mitochondrion membrane. The enzyme catalyses a ubiquinone + NADH + 5 H(+)(in) = a ubiquinol + NAD(+) + 4 H(+)(out). In terms of biological role, core subunit of the mitochondrial membrane respiratory chain NADH dehydrogenase (Complex I) that is believed to belong to the minimal assembly required for catalysis. Complex I functions in the transfer of electrons from NADH to the respiratory chain. The immediate electron acceptor for the enzyme is believed to be ubiquinone. The protein is NADH-ubiquinone oxidoreductase chain 4 (ND4) of Locusta migratoria (Migratory locust).